The sequence spans 173 residues: RNA silencing suppressor p19 (173 aa).

Basic and acidic residues predominate over residues 1–21 (MERAIQRSDAREQANSERWDG). Positions 1–34 (MERAIQRSDAREQANSERWDGRCGGTITPFKLPD) are disordered.

Belongs to the tombusvirus protein p19 family. As to quaternary structure, homodimer.

Viral suppressor of RNA silencing which binds specifically to silencing RNAs (siRNAs). Acts as a molecular caliper to specifically select siRNAs based on the length of the duplex region of the RNA. This is RNA silencing suppressor p19 from Cucumis sativus (Cucumber).